The following is a 640-amino-acid chain: Cytochrome P450 monooxygenase cyp1 (640 aa).

The N-linked (GlcNAc...) asparagine glycan is linked to N71. The helical transmembrane segment at 120-139 threads the bilayer; the sequence is LLVFLVGLFLGTIYLLYRYW. Residue N350 is glycosylated (N-linked (GlcNAc...) asparagine). C572 provides a ligand contact to heme.

This sequence belongs to the cytochrome P450 family. Requires heme as cofactor.

It localises to the membrane. It functions in the pathway secondary metabolite biosynthesis. Cytochrome P450 monooxygenase; part of the gene cluster that mediates the biosynthesis of the glycolipid biosurfactant ustilagic acid (UA). UA is a secreted cellobiose glycolipid that is toxic for many microorganisms and confers biocontrol activity to U.maydis. UA consists of 15,16-dihydroxypalmitic or 2,15,16-trihydroxypalmitic acid, which is O-glycosidically linked to cellobiose at its terminal hydroxyl group. In addition, the cellobiose moiety is acetylated and acylated with a short-chain hydroxy fatty acid. UA biosynthesis starts with omega-hydroxylation of palmitic acid catalyzed by the cytochrome P450 monooxygenase cyp1. Terminal hydroxylation of palmitic acid precedes subterminal hydroxylation catalyzed by the cytochrome P450 monooxygenase cyp2. Sequential glucosylation of the hydroxy fatty acid is probably catalyzed by the glycosyltransferase ugt1. The cellobiose lipid is further decorated by acetylation of the proximal glucose residue and by acylation with a short-chain beta-hydroxy fatty acid at the distal glucose residue. The acyltransferase uat1 may be a good candidate for catalyzing either acetylation or acylation of the cellobiose lipid. The fatty acid synthase fas2 may be involved in synthesis of the carbon backbone of the short-chain beta-hydroxy fatty acid esterified to the cellobiose disaccharide. The secreted UA consists of a mixture of both alpha-hydroxylated and non-hydroxylated glycolipids; therefore, alpha-hydroxylation of the long-chain fatty, catalyzed by the fatty acid hydroxylase ahd1, occurs late in UA biosynthesis and may be the last step before secretion. This Mycosarcoma maydis (Corn smut fungus) protein is Cytochrome P450 monooxygenase cyp1.